The chain runs to 358 residues: Oligopeptide transport ATP-binding protein OppD (358 aa).

Residues 8–259 (LEVKDLAISF…PRHPYTWGLL (252 aa)) enclose the ABC transporter domain. 44-51 (GESGSGKS) contributes to the ATP binding site.

The protein belongs to the ABC transporter superfamily. The complex is composed of two ATP-binding proteins (OppD and OppF), two transmembrane proteins (OppB and OppC) and a solute-binding protein (OppA).

It is found in the cell membrane. The enzyme catalyses a [peptide](out) + ATP + H2O = a [peptide](in) + ADP + phosphate + H(+). In terms of biological role, part of the ABC transporter complex OppABCDF involved in the uptake of oligopeptides. Probably responsible for energy coupling to the transport system. Required for sporulation and genetic competence. The chain is Oligopeptide transport ATP-binding protein OppD from Bacillus subtilis (strain 168).